The sequence spans 338 residues: MESENILEAKQVSVAFRIAGKFQKAIYDIDLSLRRGEVLAIVGESGSGKSTLATAVMGLHNPNQTQITGSILLDEEEVIGKTGDSMASIRGSKVGMIFQNPLTALNPLMKIGQQIKEMLAVHDVYPENQYESRIFQLLEQVGIPNPKRVVNQFPHQLSGGMRQRVMIAIAIANDPDLIIADEPTTALDVTIQAQILDLILEIQKKKNAGVILITHDLGVVAEVADTVAVMYAGQLVEKASVEELFQNPKHPYTRSLLRSNPSAETVSDDLYVIPGSVPSLSEIEYDKDLFLARVPWMKEEAQKVISEKMTEISSNHFVRGQAWKKFEFPDQKLKGGKK.

In terms of domain architecture, ABC transporter spans 7–257; the sequence is LEAKQVSVAF…PKHPYTRSLL (251 aa). An ATP-binding site is contributed by 43–50; sequence GESGSGKS.

It belongs to the ABC transporter superfamily. As to quaternary structure, the complex is composed of two ATP-binding proteins (OppD and OppF), two transmembrane proteins (OppB and OppC) and a solute-binding protein (OppA).

It is found in the cell membrane. The enzyme catalyses a [peptide](out) + ATP + H2O = a [peptide](in) + ADP + phosphate + H(+). Functionally, part of the ABC transporter complex OppABCDF involved in the uptake of oligopeptides. Probably responsible for energy coupling to the transport system. Essential for uptake of peptides larger than three amino acids and for growth in milk. The sequence is that of Oligopeptide transport ATP-binding protein OppD from Lactococcus lactis subsp. cremoris (strain SK11).